The following is a 333-amino-acid chain: Nuclear egress protein 1 (333 aa).

The disordered stretch occupies residues 45–64; the sequence is SRRYKSVSRSGPSMRVRSRT. The segment at 128 to 251 adopts a CCCH-type zinc-finger fold; that stretch reads CLSLSGMGYH…YVIFPGKSVH (124 aa).

Belongs to the herpesviridae NEC1 protein family. Forms a heterohexameric complex with NEC2. Interacts with capsid vertex specific component 2/CVC2; this interaction directs the capsid to the host inner nuclear membrane to initiate budding. Phosphorylated at serine residues in the N-terminus. This phosphorylation regulates the localization within the inner nuclear membrane.

The protein localises to the host nucleus inner membrane. Its function is as follows. Plays an essential role in virion nuclear egress, the first step of virion release from infected cell. Within the host nucleus, NEC1 interacts with the newly formed capsid through the vertexes and directs it to the inner nuclear membrane by associating with NEC2. Induces the budding of the capsid at the inner nuclear membrane as well as its envelopment into the perinuclear space. There, the NEC1/NEC2 complex promotes the fusion of the enveloped capsid with the outer nuclear membrane and the subsequent release of the viral capsid into the cytoplasm where it will reach the secondary budding sites in the host Golgi or trans-Golgi network. This Varicella-zoster virus (strain Dumas) (HHV-3) protein is Nuclear egress protein 1.